Consider the following 361-residue polypeptide: Peptide chain release factor 1 (361 aa).

The residue at position 233 (Gln233) is an N5-methylglutamine. Residues 282–310 form a disordered region; it reads SKKQAERAQNRKSQVGSGDRSERIRTYNF.

Belongs to the prokaryotic/mitochondrial release factor family. In terms of processing, methylated by PrmC. Methylation increases the termination efficiency of RF1.

It is found in the cytoplasm. In terms of biological role, peptide chain release factor 1 directs the termination of translation in response to the peptide chain termination codons UAG and UAA. The protein is Peptide chain release factor 1 of Treponema denticola (strain ATCC 35405 / DSM 14222 / CIP 103919 / JCM 8153 / KCTC 15104).